The primary structure comprises 571 residues: 15-cis-phytoene desaturase, chloroplastic/chromoplastic (571 aa).

The N-terminal 96 residues, 1 to 96 (MDTGCLSSMN…FRNSERPSKP (96 aa)), are a transit peptide targeting the chloroplast and chromoplast. FAD is bound by residues Ala-107, 126-127 (EA), Lys-134, 151-152 (HI), and Tyr-157. Arg-292 contacts substrate. Residues Ile-334 and Asp-523 each contribute to the FAD site. Residue Ala-531 participates in substrate binding. Residue Met-533 coordinates FAD.

This sequence belongs to the carotenoid/retinoid oxidoreductase family. As to quaternary structure, homotetramer. It depends on FAD as a cofactor.

It localises to the plastid. The protein localises to the chloroplast. Its subcellular location is the chromoplast. The protein resides in the membrane. The enzyme catalyses 2 a plastoquinone + 15-cis-phytoene = 9,9',15-tri-cis-zeta-carotene + 2 a plastoquinol. The protein operates within carotenoid biosynthesis; lycopene biosynthesis. Converts phytoene into zeta-carotene via the intermediary of phytofluene by the symmetrical introduction of two double bonds at the C-11 and C-11' positions of phytoene with a concomitant isomerization of two neighboring double bonds at the C9 and C9' positions from trans to cis. This Zea mays (Maize) protein is 15-cis-phytoene desaturase, chloroplastic/chromoplastic (PDS1).